We begin with the raw amino-acid sequence, 406 residues long: Succinyl-diaminopimelate desuccinylase (406 aa).

Residue His-95 participates in Zn(2+) binding. Asp-97 is an active-site residue. Position 128 (Asp-128) interacts with Zn(2+). Residue Glu-162 is the Proton acceptor of the active site. Positions 163, 191, and 377 each coordinate Zn(2+).

This sequence belongs to the peptidase M20A family. DapE subfamily. Homodimer. Zn(2+) is required as a cofactor. Co(2+) serves as cofactor.

The enzyme catalyses N-succinyl-(2S,6S)-2,6-diaminopimelate + H2O = (2S,6S)-2,6-diaminopimelate + succinate. The protein operates within amino-acid biosynthesis; L-lysine biosynthesis via DAP pathway; LL-2,6-diaminopimelate from (S)-tetrahydrodipicolinate (succinylase route): step 3/3. Its function is as follows. Catalyzes the hydrolysis of N-succinyl-L,L-diaminopimelic acid (SDAP), forming succinate and LL-2,6-diaminopimelate (DAP), an intermediate involved in the bacterial biosynthesis of lysine and meso-diaminopimelic acid, an essential component of bacterial cell walls. This chain is Succinyl-diaminopimelate desuccinylase, found in Polaromonas naphthalenivorans (strain CJ2).